We begin with the raw amino-acid sequence, 295 residues long: Acetyl-coenzyme A carboxylase carboxyl transferase subunit beta (295 aa).

A CoA carboxyltransferase N-terminal domain is found at 25–294 (VWTKCTSCEQ…PFNAEELSDT (270 aa)). Positions 29, 32, 48, and 51 each coordinate Zn(2+). The C4-type zinc finger occupies 29–51 (CTSCEQVLYRDELKRHLEVCPKC).

Belongs to the AccD/PCCB family. Acetyl-CoA carboxylase is a heterohexamer composed of biotin carboxyl carrier protein (AccB), biotin carboxylase (AccC) and two subunits each of ACCase subunit alpha (AccA) and ACCase subunit beta (AccD). Zn(2+) serves as cofactor.

Its subcellular location is the cytoplasm. The enzyme catalyses N(6)-carboxybiotinyl-L-lysyl-[protein] + acetyl-CoA = N(6)-biotinyl-L-lysyl-[protein] + malonyl-CoA. Its pathway is lipid metabolism; malonyl-CoA biosynthesis; malonyl-CoA from acetyl-CoA: step 1/1. Component of the acetyl coenzyme A carboxylase (ACC) complex. Biotin carboxylase (BC) catalyzes the carboxylation of biotin on its carrier protein (BCCP) and then the CO(2) group is transferred by the transcarboxylase to acetyl-CoA to form malonyl-CoA. The sequence is that of Acetyl-coenzyme A carboxylase carboxyl transferase subunit beta from Mannheimia succiniciproducens (strain KCTC 0769BP / MBEL55E).